A 414-amino-acid chain; its full sequence is Bifunctional protein GlmU (414 aa).

Residues 1–208 form a pyrophosphorylase region; the sequence is MDAVILCAGS…SSKLYGIELN (208 aa). UTP contacts are provided by residues 6–9, Gln-74, and Gly-79; that span reads LCAG. Residues Thr-80, Gly-130, Asn-142, and Asn-162 each coordinate N-acetyl-alpha-D-glucosamine 1-phosphate. The tract at residues 209–228 is linker; it reads GYWNDIGRPWDVLSANNYFL. The N-acetyltransferase stretch occupies residues 229–414; that stretch reads KNIMPKISGN…KDELIIKKRN (186 aa). His-312 (proton acceptor) is an active-site residue. Residues Ala-388 and Lys-405 each contribute to the acetyl-CoA site.

The protein in the N-terminal section; belongs to the N-acetylglucosamine-1-phosphate uridyltransferase family. This sequence in the C-terminal section; belongs to the transferase hexapeptide repeat family.

It catalyses the reaction N-acetyl-alpha-D-glucosamine 1-phosphate + UTP + H(+) = UDP-N-acetyl-alpha-D-glucosamine + diphosphate. It carries out the reaction alpha-D-glucosamine 1-phosphate + acetyl-CoA = N-acetyl-alpha-D-glucosamine 1-phosphate + CoA + H(+). It functions in the pathway nucleotide-sugar biosynthesis; UDP-N-acetyl-alpha-D-glucosamine biosynthesis; N-acetyl-alpha-D-glucosamine 1-phosphate from alpha-D-glucosamine 6-phosphate (route II): step 2/2. Its pathway is nucleotide-sugar biosynthesis; UDP-N-acetyl-alpha-D-glucosamine biosynthesis; UDP-N-acetyl-alpha-D-glucosamine from N-acetyl-alpha-D-glucosamine 1-phosphate: step 1/1. Its function is as follows. Catalyzes the last two sequential reactions in the de novo biosynthetic pathway for UDP-N-acetyl-glucosamine (UDP-GlcNAc). Responsible for the acetylation of GlcN-1-P to GlcNAc-1-P, and for the uridyl transfer from UTP to GlcNAc-1-P, to produce UDP-GlcNAc and pyrophosphate. The protein is Bifunctional protein GlmU of Methanococcus vannielii (strain ATCC 35089 / DSM 1224 / JCM 13029 / OCM 148 / SB).